The following is a 75-amino-acid chain: Small ribosomal subunit protein bS18 (75 aa).

It belongs to the bacterial ribosomal protein bS18 family. In terms of assembly, part of the 30S ribosomal subunit. Forms a tight heterodimer with protein bS6.

Binds as a heterodimer with protein bS6 to the central domain of the 16S rRNA, where it helps stabilize the platform of the 30S subunit. In Anaplasma marginale (strain St. Maries), this protein is Small ribosomal subunit protein bS18.